Reading from the N-terminus, the 507-residue chain is Probable aldehyde dehydrogenase (507 aa).

219–225 (GFGVEAG) contributes to the NAD(+) binding site. Catalysis depends on residues glutamate 263 and cysteine 302.

Belongs to the aldehyde dehydrogenase family.

The catalysed reaction is an aldehyde + NAD(+) + H2O = a carboxylate + NADH + 2 H(+). This chain is Probable aldehyde dehydrogenase, found in Streptomyces coelicolor (strain ATCC BAA-471 / A3(2) / M145).